Consider the following 262-residue polypeptide: Lysine 5,6-aminomutase beta subunit (262 aa).

Positions 120 to 262 constitute a B12-binding domain; that stretch reads KIVVVGASTG…VKTLNDRMNS (143 aa). Adenosylcob(III)alamin-binding positions include 130-136 and H133; that span reads TDAHTVG. An N6-(pyridoxal phosphate)lysine modification is found at K144. Adenosylcob(III)alamin is bound by residues 185–192, 219–223, and 239–244; these read LVSQTVTQ, LCGGP, and FGPGRF.

It belongs to the KamE family. As to quaternary structure, heterotetramer of 2 alpha and 2 beta subunits. Adenosylcob(III)alamin serves as cofactor. Requires pyridoxal 5'-phosphate as cofactor.

It carries out the reaction (3S)-3,6-diaminohexanoate = (3S,5S)-3,5-diaminohexanoate. The catalysed reaction is D-lysine = (2R,5S)-2,5-diaminohexanoate. It functions in the pathway amino-acid metabolism; lysine degradation. Its activity is regulated as follows. Rapidly inactivated in the presence of D-lysine and to a lesser extent in the absence of adenosylcobalamin (Adocbl). Activity is stable in the presence of Adocbl when D-lysine is absent. Adocbl imparts thermal stability at 37 degrees Celsius. Its function is as follows. Catalyzes the migration of the L-beta-lysine and D-lysine epsilon amino group to the delta carbon to produce 3,5-diaminohexanoate and 2,5-diaminohexanoate, respectively. This Acetoanaerobium sticklandii (strain ATCC 12662 / DSM 519 / JCM 1433 / CCUG 9281 / NCIMB 10654 / HF) (Clostridium sticklandii) protein is Lysine 5,6-aminomutase beta subunit (kamE).